A 627-amino-acid chain; its full sequence is 1,4-alpha-glucan branching enzyme GlgB (627 aa).

Aspartate 309 functions as the Nucleophile in the catalytic mechanism. Glutamate 352 serves as the catalytic Proton donor.

The protein belongs to the glycosyl hydrolase 13 family. GlgB subfamily. As to quaternary structure, monomer.

It carries out the reaction Transfers a segment of a (1-&gt;4)-alpha-D-glucan chain to a primary hydroxy group in a similar glucan chain.. It functions in the pathway glycan biosynthesis; glycogen biosynthesis. Functionally, catalyzes the formation of the alpha-1,6-glucosidic linkages in glycogen by scission of a 1,4-alpha-linked oligosaccharide from growing alpha-1,4-glucan chains and the subsequent attachment of the oligosaccharide to the alpha-1,6 position. This is 1,4-alpha-glucan branching enzyme GlgB (glgB) from Bacillus subtilis (strain 168).